We begin with the raw amino-acid sequence, 76 residues long: MSWYEKYNIVLNPPKRCFSSCADNLTTILAEDGNNIRAILYSQPQKLKVLQDFLATSRNKMFLYKILDDEIRRVLT.

A disulfide bridge connects residues C17 and C21.

Belongs to the orthopoxvirus OPG128 family. As to quaternary structure, interacts with sulfhydryl oxidase OPG072; this interaction involves formation of a transient disulfide-bonded intermediate, allowing disulfide bond transfer. Interacts with OPG088; this interaction involves formation of a transient disulfide-bonded intermediate, allowing disulfide bond transfer.

Functionally, late protein which probably participates in disulfide bond formation by functioning as a thiol-disulfide transfer protein between membrane-associated OPG072 and OPG08. The complete pathway for formation of disulfide bonds in intracellular virion membrane proteins sequentially involves oxidation of OPG072, OPG128 and OPG08. This chain is Protein OPG128 (OPG128), found in Variola virus (isolate Human/India/Ind3/1967) (VARV).